The sequence spans 623 residues: Kelch repeat and BTB domain-containing protein 2 (623 aa).

The BTB domain occupies 31–98 (TDIVLIVEGT…AYTGNLAMND (68 aa)). The BACK domain maps to 133-229 (CVRLLSFADL…IRIDALSEVT (97 aa)). Residue S300 is modified to Phosphoserine. Kelch repeat units lie at residues 317-380 (DIYI…CCEG), 381-429 (YIYA…VVHD), 431-469 (IYVM…AFGD), 470-529 (KIFY…RAVV), and 535-581 (CVFM…DFRC).

In terms of assembly, component of the BCR(KBTBD2) E3 ubiquitin ligase complex, at least composed of CUL3, KBTBD2 and RBX1. Interacts (via the BTB domain) with CUL3.

The protein operates within protein modification; protein ubiquitination. Substrate-specific adapter of a BCR (BTB-CUL3-RBX1) E3 ubiquitin ligase complex that acts as a regulator of the insulin signaling pathway, modulating insulin sensitivity by limiting PIK3R1/p85alpha abundance in adipocytes. Targets PIK3R1, the regulatory subunit of phosphatidylinositol 3-kinase (PI3K), for 'Lys-48'-linked polyubiquitination and proteasome-mediated degradation. This Homo sapiens (Human) protein is Kelch repeat and BTB domain-containing protein 2.